The chain runs to 474 residues: Receptor-transporting protein 3 (474 aa).

Over Met-1–Met-453 the chain is Cytoplasmic. A 3CxxC-type zinc finger spans residues Thr-53–Gly-164. Positions Ser-175–Thr-304 are disordered. 2 stretches are compositionally biased toward polar residues: residues Val-197–Lys-228 and Val-259–Thr-304. Residues Ser-454 to Leu-474 traverse the membrane as a helical segment.

This sequence belongs to the TMEM7 family. Interacts with TAS2R16. Expressed predominantly in the liver. Not detected in the olfactory epithelium.

It localises to the membrane. In terms of biological role, promotes functional cell surface expression of the bitter taste receptors TAS2R16 and TAS2R43. This chain is Receptor-transporting protein 3 (Rtp3), found in Mus musculus (Mouse).